The sequence spans 406 residues: Endo-xylogalacturonan hydrolase A (406 aa).

Residues 1-18 (MALYRNLYLLASLGLSSA) form the signal peptide. 5 PbH1 repeats span residues 183–213 (ATNV…DIGE), 214–257 (STYV…SVGS), 266–289 (VKNI…KTYP), 299–320 (VSNV…QIQS), and 333–375 (PGNA…SISG). The Proton donor role is filled by Asp228. His251 is a catalytic residue. N-linked (GlcNAc...) asparagine glycans are attached at residues Asn278 and Asn301.

It belongs to the glycosyl hydrolase 28 family.

Its subcellular location is the secreted. Its function is as follows. Pectinolytic enzyme involved in the degradation of xylogalacturonan (xga), a galacturonan backbone heavily substituted with xylose, and which is one important component of the hairy regions of pectin. Activity requires a galacturonic acid backbone substituted with xylose. The sequence is that of Endo-xylogalacturonan hydrolase A (xghA) from Aspergillus tubingensis.